The chain runs to 439 residues: Xylose isomerase (439 aa).

Residues histidine 101 and aspartate 104 contribute to the active site. 7 residues coordinate Mg(2+): glutamate 232, glutamate 268, histidine 271, aspartate 296, aspartate 307, aspartate 309, and aspartate 339.

The protein belongs to the xylose isomerase family. Homotetramer. Requires Mg(2+) as cofactor.

The protein localises to the cytoplasm. The catalysed reaction is alpha-D-xylose = alpha-D-xylulofuranose. This Yersinia pseudotuberculosis serotype O:1b (strain IP 31758) protein is Xylose isomerase.